Reading from the N-terminus, the 205-residue chain is Ribosomal RNA small subunit methyltransferase G (205 aa).

Residues Gly76, Leu81, 127 to 128, and Arg140 each bind S-adenosyl-L-methionine; that span reads IE.

Belongs to the methyltransferase superfamily. RNA methyltransferase RsmG family.

The protein localises to the cytoplasm. The enzyme catalyses guanosine(527) in 16S rRNA + S-adenosyl-L-methionine = N(7)-methylguanosine(527) in 16S rRNA + S-adenosyl-L-homocysteine. Specifically methylates the N7 position of guanine in position 527 of 16S rRNA. The polypeptide is Ribosomal RNA small subunit methyltransferase G (Francisella tularensis subsp. novicida (strain U112)).